The following is a 74-amino-acid chain: uncharacterized protein (74 aa).

Residues 29 to 63 are a coiled coil; sequence LNSKKSALQKDKELQQQAKAQESALAGEELRRRAL.

This is an uncharacterized protein from Pseudoalteromonas phage PM2 (Bacteriophage PM2).